Consider the following 115-residue polypeptide: MAKPEPDVVVPEGDPAKGAKLFKSKCAQCHTINKGGSVKQGPNLFGFYGRKSGSTDYAYSDANKNSGIVWSDKHLFVYLVNPKQYIPGTKMVFAGLKKEQDRADLIAYLKEASSK.

Heme c is bound by residues Cys-26, Cys-29, His-30, and Met-91.

This sequence belongs to the cytochrome c family. Binds 1 heme c group covalently per subunit.

The protein resides in the mitochondrion intermembrane space. In terms of biological role, electron carrier protein. The oxidized form of the cytochrome c heme group can accept an electron from the heme group of the cytochrome c1 subunit of cytochrome reductase. Cytochrome c then transfers this electron to the cytochrome oxidase complex, the final protein carrier in the mitochondrial electron-transport chain. The protein is Cytochrome c of Theileria annulata.